The sequence spans 403 residues: Acetate kinase (403 aa).

Asparagine 8 is a binding site for Mg(2+). Position 15 (lysine 15) interacts with ATP. Arginine 90 is a substrate binding site. Aspartate 147 (proton donor/acceptor) is an active-site residue. Residues 207 to 211 (HLGSG), 282 to 284 (DLR), and 330 to 334 (GVGEN) each bind ATP. Glutamate 384 contacts Mg(2+).

Belongs to the acetokinase family. As to quaternary structure, homodimer. The cofactor is Mg(2+). Mn(2+) is required as a cofactor.

It is found in the cytoplasm. The enzyme catalyses acetate + ATP = acetyl phosphate + ADP. Its pathway is metabolic intermediate biosynthesis; acetyl-CoA biosynthesis; acetyl-CoA from acetate: step 1/2. Catalyzes the formation of acetyl phosphate from acetate and ATP. Can also catalyze the reverse reaction. The chain is Acetate kinase from Exiguobacterium sp. (strain ATCC BAA-1283 / AT1b).